Here is a 330-residue protein sequence, read N- to C-terminus: Biotin synthase (330 aa).

The region spanning 55–282 (NAVQRSTLLS…TAYVRLSAGR (228 aa)) is the Radical SAM core domain. [4Fe-4S] cluster is bound by residues cysteine 70, cysteine 74, and cysteine 77. [2Fe-2S] cluster contacts are provided by cysteine 114, cysteine 145, cysteine 205, and arginine 277.

The protein belongs to the radical SAM superfamily. Biotin synthase family. In terms of assembly, homodimer. [4Fe-4S] cluster is required as a cofactor. It depends on [2Fe-2S] cluster as a cofactor.

The enzyme catalyses (4R,5S)-dethiobiotin + (sulfur carrier)-SH + 2 reduced [2Fe-2S]-[ferredoxin] + 2 S-adenosyl-L-methionine = (sulfur carrier)-H + biotin + 2 5'-deoxyadenosine + 2 L-methionine + 2 oxidized [2Fe-2S]-[ferredoxin]. The protein operates within cofactor biosynthesis; biotin biosynthesis; biotin from 7,8-diaminononanoate: step 2/2. Its function is as follows. Catalyzes the conversion of dethiobiotin (DTB) to biotin by the insertion of a sulfur atom into dethiobiotin via a radical-based mechanism. The protein is Biotin synthase of Methylibium petroleiphilum (strain ATCC BAA-1232 / LMG 22953 / PM1).